The sequence spans 467 residues: Immunoglobulin superfamily member 21 (467 aa).

Residues 1-24 form the signal peptide; the sequence is MRTAPSLRRCVCLLLAAILDLARG. In terms of domain architecture, Ig-like 1 spans 25-132; that stretch reads YLTVNIEPLP…RATREKVVLA (108 aa). Residues Cys-46 and Cys-116 are joined by a disulfide bond. N-linked (GlcNAc...) asparagine glycans are attached at residues Asn-82 and Asn-165. Positions 229 to 259 are disordered; the sequence is LSLLDAENRGGRPYTERPSRGLTPDPNILLQ. Over residues 234 to 247 the composition is skewed to basic and acidic residues; that stretch reads AENRGGRPYTERPS. An Ig-like 2 domain is found at 344-429; sequence PKIVMTPSRA…GSTDTHTRLI (86 aa). 2 N-linked (GlcNAc...) asparagine glycosylation sites follow: Asn-407 and Asn-444.

In terms of assembly, interacts (Ig-like 1 domain) with NRXN2 (via Laminin G-like 1 domain) in a trans-interaction manner.

Its subcellular location is the postsynaptic cell membrane. Its function is as follows. Involved in synaptic inhibition in the brain. Selectively regulates inhibitory presynaptic differentiation through interacting with presynaptic NRXN2. The protein is Immunoglobulin superfamily member 21 of Homo sapiens (Human).